A 104-amino-acid chain; its full sequence is Protein P3 (104 aa).

A helical transmembrane segment spans residues 77 to 99; the sequence is LVFGVPQKTLLLGFGGLLVLGLV.

As to quaternary structure, homodimer.

It localises to the virion membrane. In Pseudoalteromonas phage PM2 (Bacteriophage PM2), this protein is Protein P3 (III).